A 415-amino-acid chain; its full sequence is Cyclin-A2 (415 aa).

The protein belongs to the cyclin family. Cyclin AB subfamily. As to quaternary structure, interacts with the CDK1 and CDK2 protein kinases to form serine/threonine kinase holoenzyme complexes. In terms of tissue distribution, ubiquitous.

The protein localises to the nucleus. Its subcellular location is the cytoplasm. Functionally, cyclin which controls both the G1/S and the G2/M transition phases of the cell cycle. Functions through the formation of specific serine/threonine kinase holoenzyme complexes with the cyclin-dependent protein kinases CDK1 and CDK2. The cyclin subunit confers the substrate specificity of these complexes and differentially interacts with and activates CDK1 and CDK2 throughout the cell cycle. This Xenopus laevis (African clawed frog) protein is Cyclin-A2 (ccna2).